Reading from the N-terminus, the 778-residue chain is Actin-binding LIM protein 1 (778 aa).

LIM zinc-binding domains are found at residues I97 to T156, T156 to S216, S224 to V283, and V283 to E343. S216 carries the phosphoserine modification. The interval S339–H370 is disordered. Positions P360–G369 are enriched in low complexity. S367 is subject to Phosphoserine. 2 positions are modified to phosphotyrosine: Y373 and Y396. 2 disordered regions span residues Y414–K510 and A552–L597. S422, S426, and S431 each carry phosphoserine. The segment covering L423–P434 has biased composition (polar residues). T433 carries the phosphothreonine modification. Residue S435 is modified to Phosphoserine. Y439 is modified (phosphotyrosine). Positions R449–P474 are enriched in polar residues. A phosphoserine mark is found at S452, S455, S458, S498, and S587. A coiled-coil region spans residues E590 to L614. K620 is covalently cross-linked (Glycyl lysine isopeptide (Lys-Gly) (interchain with G-Cter in SUMO2)). Residues S640, S655, S677, and S706 each carry the phosphoserine modification. An HP domain is found at M710–F778.

As to quaternary structure, binds F-actin. Interacts with ABRA. As to expression, detected in liver, heart, skeletal muscle, brain and retina, where it is concentrated in the inner segment and in the outer plexiform layers.

The protein resides in the cytoplasm. Its subcellular location is the cytoskeleton. In terms of biological role, may act as scaffold protein. May play a role in the development of the retina. Has been suggested to play a role in axon guidance. This is Actin-binding LIM protein 1 (ABLIM1) from Homo sapiens (Human).